We begin with the raw amino-acid sequence, 612 residues long: Alpha-glycerophosphate oxidase (612 aa).

21-49 (DLLIIGGGITGAGVALQAAASGLDTGLIE) contacts FAD. Residues 398–408 (VETSTSEKELD) are compositionally biased toward basic and acidic residues. The tract at residues 398 to 418 (VETSTSEKELDPSAVSRGSSF) is disordered.

The protein belongs to the FAD-dependent glycerol-3-phosphate dehydrogenase family. The cofactor is FAD.

The protein localises to the cytoplasm. It catalyses the reaction sn-glycerol 3-phosphate + O2 = dihydroxyacetone phosphate + H2O2. This chain is Alpha-glycerophosphate oxidase (glpO), found in Streptococcus pyogenes serotype M3 (strain ATCC BAA-595 / MGAS315).